A 338-amino-acid chain; its full sequence is DNA-directed RNA polymerase subunit alpha (338 aa).

Positions 1-234 are alpha N-terminal domain (alpha-NTD); sequence MIERNWNELI…DQLQIFITFE (234 aa). The tract at residues 250-338 is alpha C-terminal domain (alpha-CTD); it reads FNPALLKKVD…DLAKKFEDQI (89 aa).

The protein belongs to the RNA polymerase alpha chain family. Homodimer. The RNAP catalytic core consists of 2 alpha, 1 beta, 1 beta' and 1 omega subunit. When a sigma factor is associated with the core the holoenzyme is formed, which can initiate transcription.

It carries out the reaction RNA(n) + a ribonucleoside 5'-triphosphate = RNA(n+1) + diphosphate. DNA-dependent RNA polymerase catalyzes the transcription of DNA into RNA using the four ribonucleoside triphosphates as substrates. This Caulobacter vibrioides (strain ATCC 19089 / CIP 103742 / CB 15) (Caulobacter crescentus) protein is DNA-directed RNA polymerase subunit alpha.